The primary structure comprises 385 residues: Isocitrate dehydrogenase [NAD] subunit beta, mitochondrial (385 aa).

The N-terminal 34 residues, 1–34 (MAALSGVRWLTRALVSAGNPGAWRGLSTSAAAHA), are a transit peptide targeting the mitochondrion. N6-acetyllysine is present on K199.

Belongs to the isocitrate and isopropylmalate dehydrogenases family. As to quaternary structure, heterooligomer of subunits alpha (IDH3A), beta (IDH3B), and gamma (IDH3G) in the apparent ratio of 2:1:1. The heterodimer containing one IDH3A and one IDH3B subunit and the heterodimer containing one IDH3A and one IDH3G subunit assemble into a heterotetramer (which contains two subunits of IDH3A, one of IDH3B and one of IDH3G) and further into the heterooctamer.

It is found in the mitochondrion. With respect to regulation, the heterotetramer and the heterodimer composed of IDH3A and IDH3G subunits can be allosterically activated by citrate (CIT) or/and ADP, and the two activators can act independently or synergistically. The heterodimer composed of IDH3A and IDH3B subunits cannot be allosterically regulated and the allosteric regulation of the heterotetramer is through the IDH3G subunit and not the IDH3B subunit. The IDH3G subunit contains the allosteric site which consists of a CIT-binding site and an ADP-binding site, and the binding of CIT and ADP causes conformational changes at the allosteric site which are transmitted to the active site in the catalytic subunit (IDH3A) through a cascade of conformational changes at the heterodimer interface, leading to stabilization of the isocitrate-binding at the active site and thus activation of the enzyme. ATP can activate the heterotetramer and the heterodimer composed of IDH3A and IDH3G subunits at low concentrations but inhibits their activities at high concentrations, whereas ATP exhibits only inhibitory effect on the heterodimer composed of IDH3A and IDH3B subunits. In terms of biological role, plays a structural role to facilitate the assembly and ensure the full activity of the enzyme catalyzing the decarboxylation of isocitrate (ICT) into alpha-ketoglutarate. The heterodimer composed of the alpha (IDH3A) and beta (IDH3B) subunits and the heterodimer composed of the alpha (IDH3A) and gamma (IDH3G) subunits, have considerable basal activity but the full activity of the heterotetramer (containing two subunits of IDH3A, one of IDH3B and one of IDH3G) requires the assembly and cooperative function of both heterodimers. This Homo sapiens (Human) protein is Isocitrate dehydrogenase [NAD] subunit beta, mitochondrial (IDH3B).